Consider the following 570-residue polypeptide: Sulfite reductase [NADPH] hemoprotein beta-component (570 aa).

Residues C434, C440, C479, and C483 each contribute to the [4Fe-4S] cluster site. Residue C483 participates in siroheme binding.

The protein belongs to the nitrite and sulfite reductase 4Fe-4S domain family. As to quaternary structure, alpha(8)-beta(8). The alpha component is a flavoprotein, the beta component is a hemoprotein. Requires siroheme as cofactor. The cofactor is [4Fe-4S] cluster.

The enzyme catalyses hydrogen sulfide + 3 NADP(+) + 3 H2O = sulfite + 3 NADPH + 4 H(+). It participates in sulfur metabolism; hydrogen sulfide biosynthesis; hydrogen sulfide from sulfite (NADPH route): step 1/1. Component of the sulfite reductase complex that catalyzes the 6-electron reduction of sulfite to sulfide. This is one of several activities required for the biosynthesis of L-cysteine from sulfate. This chain is Sulfite reductase [NADPH] hemoprotein beta-component, found in Salmonella typhi.